The following is a 147-amino-acid chain: Large ribosomal subunit protein bL9 (147 aa).

The protein belongs to the bacterial ribosomal protein bL9 family.

Functionally, binds to the 23S rRNA. This chain is Large ribosomal subunit protein bL9, found in Clostridium tetani (strain Massachusetts / E88).